The chain runs to 330 residues: DNA primase small subunit PriS (330 aa).

Active-site residues include Asp-101 and Asp-103. 4 residues coordinate Zn(2+): Cys-116, Cys-119, Cys-128, and Asp-131. Residue Asp-235 is part of the active site.

The protein belongs to the eukaryotic-type primase small subunit family. As to quaternary structure, heterodimer of a small subunit (PriS) and a large subunit (PriL). It depends on Mg(2+) as a cofactor. Mn(2+) serves as cofactor.

Catalytic subunit of DNA primase, an RNA polymerase that catalyzes the synthesis of short RNA molecules used as primers for DNA polymerase during DNA replication. The small subunit contains the primase catalytic core and has DNA synthesis activity on its own. Binding to the large subunit stabilizes and modulates the activity, increasing the rate of DNA synthesis while decreasing the length of the DNA fragments, and conferring RNA synthesis capability. The DNA polymerase activity may enable DNA primase to also catalyze primer extension after primer synthesis. May also play a role in DNA repair. In Saccharolobus islandicus (strain Y.N.15.51 / Yellowstone #2) (Sulfolobus islandicus), this protein is DNA primase small subunit PriS.